The sequence spans 225 residues: NAD(P)H-quinone oxidoreductase subunit K, chloroplastic (225 aa).

C43, C44, C108, and C139 together coordinate [4Fe-4S] cluster.

Belongs to the complex I 20 kDa subunit family. In terms of assembly, NDH is composed of at least 16 different subunits, 5 of which are encoded in the nucleus. [4Fe-4S] cluster is required as a cofactor.

It localises to the plastid. Its subcellular location is the chloroplast thylakoid membrane. The catalysed reaction is a plastoquinone + NADH + (n+1) H(+)(in) = a plastoquinol + NAD(+) + n H(+)(out). The enzyme catalyses a plastoquinone + NADPH + (n+1) H(+)(in) = a plastoquinol + NADP(+) + n H(+)(out). NDH shuttles electrons from NAD(P)H:plastoquinone, via FMN and iron-sulfur (Fe-S) centers, to quinones in the photosynthetic chain and possibly in a chloroplast respiratory chain. The immediate electron acceptor for the enzyme in this species is believed to be plastoquinone. Couples the redox reaction to proton translocation, and thus conserves the redox energy in a proton gradient. The polypeptide is NAD(P)H-quinone oxidoreductase subunit K, chloroplastic (Platanus occidentalis (Sycamore)).